The primary structure comprises 198 residues: Inner membrane-spanning protein YciB (198 aa).

The next 5 helical transmembrane spans lie at 36–56, 67–87, 90–110, 133–153, and 162–182; these read IFSATAMLIISSVVVYGILYL, LTLVACLVFGSLTLAFHSETF, WKAPVVNWLFAVAFAGSHFIG, LNIAWIVFFLFCGAANLYVAF, and FKVFGSLGMTLIFLVGQGIYL.

It belongs to the YciB family.

Its subcellular location is the cell inner membrane. In terms of biological role, plays a role in cell envelope biogenesis, maintenance of cell envelope integrity and membrane homeostasis. The polypeptide is Inner membrane-spanning protein YciB (Pseudomonas savastanoi pv. phaseolicola (strain 1448A / Race 6) (Pseudomonas syringae pv. phaseolicola (strain 1448A / Race 6))).